A 180-amino-acid chain; its full sequence is UPF0227 protein Spro_1925 (180 aa).

It belongs to the UPF0227 family.

This chain is UPF0227 protein Spro_1925, found in Serratia proteamaculans (strain 568).